Reading from the N-terminus, the 203-residue chain is Protein GrpE (203 aa).

The span at Met1–Asn20 shows a compositional bias: polar residues. Residues Met1–Lys46 are disordered.

The protein belongs to the GrpE family. Homodimer.

The protein resides in the cytoplasm. Functionally, participates actively in the response to hyperosmotic and heat shock by preventing the aggregation of stress-denatured proteins, in association with DnaK and GrpE. It is the nucleotide exchange factor for DnaK and may function as a thermosensor. Unfolded proteins bind initially to DnaJ; upon interaction with the DnaJ-bound protein, DnaK hydrolyzes its bound ATP, resulting in the formation of a stable complex. GrpE releases ADP from DnaK; ATP binding to DnaK triggers the release of the substrate protein, thus completing the reaction cycle. Several rounds of ATP-dependent interactions between DnaJ, DnaK and GrpE are required for fully efficient folding. The chain is Protein GrpE from Ehrlichia chaffeensis (strain ATCC CRL-10679 / Arkansas).